We begin with the raw amino-acid sequence, 209 residues long: Immunoglobulin lambda-like polypeptide 1 (209 aa).

Residues 1–30 form the signal peptide; that stretch reads MKLRVGQTLGTIPRQCEVLLLLLLLGLVDG. A j region region spans residues 93 to 104; sequence VFGGGTQLTILG. The tract at residues 105-209 is c region; sequence QPKSDPLVTL…EKSVSPAECS (105 aa). Positions 110-204 constitute an Ig-like C1-type domain; that stretch reads PLVTLFLPSL…EGNTVEKSVS (95 aa). C131 and C190 form a disulfide bridge.

As to quaternary structure, interacts with VPREB1A. Interacts with SYNV1/HRD1 (via N-terminus); this interaction leads to increased IGLL1 ubiquitination and degradation in pre-B cells, possibly through a lysosomal, not proteasomal, pathway. Selectively expressed in pre-B lymphocytes.

Its subcellular location is the endoplasmic reticulum. It is found in the secreted. In terms of biological role, critical for B-cell development. The sequence is that of Immunoglobulin lambda-like polypeptide 1 (Igll1) from Mus musculus (Mouse).